Consider the following 396-residue polypeptide: Calcium-binding and spermatid-specific protein 1 (396 aa).

Residues 1-21 (MAEDGLPKIYSHPPTESSKTP) are disordered. Position 274 is a phosphoserine (Ser-274). The tract at residues 276-296 (EKDKDNQEDTLLTDEESPEGA) is disordered. Acidic residues predominate over residues 283–293 (EDTLLTDEESP). Thr-288 bears the Phosphothreonine; by CK2 mark. 2 positions are modified to phosphoserine: Ser-320 and Ser-377. The interval 336 to 396 (EDSSTEEELS…LKEEPDEFMI (61 aa)) is disordered.

The protein localises to the cytoplasm. It localises to the mitochondrion inner membrane. The protein resides in the cell projection. It is found in the cilium. Its subcellular location is the flagellum. The protein localises to the cytoplasmic vesicle. It localises to the secretory vesicle. The protein resides in the acrosome. Functionally, calcium-binding protein. Essential for maintaining the structural integrity of the sperm flagella. The chain is Calcium-binding and spermatid-specific protein 1 (CABS1) from Macaca fascicularis (Crab-eating macaque).